The primary structure comprises 447 residues: Chordin-like protein 1 (447 aa).

Residues 1–22 (MDGMKYIISLFFIFVFLEGSKT) form the signal peptide. VWFC domains follow at residues 30–95 (TYCV…PRCP) and 108–174 (KSCE…RVCR). Asparagine 113 carries an N-linked (GlcNAc...) asparagine glycan. Residues 174–176 (RGD) carry the Cell attachment site motif. Residues 200 to 224 (SYLRSPYDPPPNRQAGGLPRFPGSR) form a disordered region. In terms of domain architecture, VWFC 3 spans 253–318 (QVCVSNGKTY…IDGKCCKVCP (66 aa)). Asparagine 286 carries N-linked (GlcNAc...) asparagine glycosylation.

May be glycosylated. As to expression, expressed in heart, brain, lung, liver, kidney and testis.

Its subcellular location is the secreted. In terms of biological role, seems to antagonize the function of BMP4 by binding to it and preventing its interaction with receptors. Alters the fate commitment of neural stem cells from gliogenesis to neurogenesis. Contributes to neuronal differentiation of neural stem cells in the brain by preventing the adoption of a glial fate. May play a crucial role in dorsoventral axis formation. Antagonizes the function of BMP7 and may thus play an important role in the embryonic bone formation. Shows no inhibitory effect on the inducing activity of BMP2. Plays a role during anterior segment eye development. This is Chordin-like protein 1 (Chrdl1) from Mus musculus (Mouse).